A 294-amino-acid polypeptide reads, in one-letter code: MAILVRPRLLAALAPTFLGCLLLQVIAGAGIPEKAFNLTWISTDFKTILEWQPKPTNYTYTVQISDRSRNWKNKCFSTTDTECDLTDEIVKDVTWAYEAKVLSVPRRNSVHGDGDQLVIHGEEPPFTNAPKFLPYRDTNLGQPVIQQFEQDGRKLNVVVKDSLTLVRKNGTFLTLRQVFGKDLGYIITYRKGSSTGKKTNITNTNEFSIDVEEGVSYCFFVQAMIFSRKTNQNSPGSSTVCTEQWKSFLGETLIIVGAVVLLATIFIILLSISLCKRRKNRAGQKGKNTPSRLA.

The N-terminal stretch at 1-28 is a signal peptide; sequence MAILVRPRLLAALAPTFLGCLLLQVIAG. Topologically, residues 29-251 are extracellular; the sequence is AGIPEKAFNL…TEQWKSFLGE (223 aa). N-linked (GlcNAc...) asparagine glycans are attached at residues asparagine 37 and asparagine 57. Cysteines 75 and 83 form a disulfide. N-linked (GlcNAc...) asparagine glycosylation is found at asparagine 169 and asparagine 200. Cysteine 218 and cysteine 241 form a disulfide bridge. Residues 245–247 carry the WKS motif motif; the sequence is WKS. A helical membrane pass occupies residues 252-274; that stretch reads TLIIVGAVVLLATIFIILLSISL. Cysteine 275 is lipidated: S-palmitoyl cysteine. Residues 275–294 lie on the Cytoplasmic side of the membrane; it reads CKRRKNRAGQKGKNTPSRLA.

Belongs to the tissue factor family. Interacts with HSPE; the interaction, inhibited by heparin, promotes the generation of activated factor X and activates coagulation in the presence of activated factor VII.

The protein resides in the membrane. In terms of biological role, initiates blood coagulation by forming a complex with circulating factor VII or VIIa. The [TF:VIIa] complex activates factors IX or X by specific limited proteolysis. TF plays a role in normal hemostasis by initiating the cell-surface assembly and propagation of the coagulation protease cascade. The polypeptide is Tissue factor (F3) (Mus musculus (Mouse)).